The following is a 522-amino-acid chain: Neuropeptide FF receptor 2 (522 aa).

Residues 1 to 147 are Extracellular-facing; that stretch reads MNSFFGTPAA…NYYLHQPQVA (147 aa). The tract at residues 25 to 49 is disordered; the sequence is KEAGRERRALSVQQRGGPAWSGSLE. N-linked (GlcNAc...) asparagine glycans are attached at residues Asn110, Asn122, and Asn133. A helical membrane pass occupies residues 148-168; that stretch reads AIFIISYFLIFFLCMMGNTVV. Topologically, residues 169–184 are cytoplasmic; the sequence is CFIVMRNKHMHTVTNL. Residues 185–205 traverse the membrane as a helical segment; sequence FILNLAISDLLVGIFCMPITL. At 206-221 the chain is on the extracellular side; the sequence is LDNIIAGWPFGNTMCK. Cys220 and Cys308 are disulfide-bonded. The chain crosses the membrane as a helical span at residues 222–242; sequence ISGLVQGISVAASVFTLVAIA. Residues 243 to 262 lie on the Cytoplasmic side of the membrane; sequence VDRFQCVVYPFKPKLTIKTA. A helical membrane pass occupies residues 263-283; sequence FVIIMIIWVLAITIMSPSAVM. Topologically, residues 284-319 are extracellular; the sequence is LHVQEEKYYRVRLNSQNKTSPVYWCREDWPNQEMRK. N-linked (GlcNAc...) asparagine glycosylation occurs at Asn300. The helical transmembrane segment at 320-340 threads the bilayer; it reads IYTTVLFANIYLAPLSLIVIM. At 341–377 the chain is on the cytoplasmic side; that stretch reads YGRIGISLFRAAVPHTGRKNQEQWHVVSRKKQKIIKM. A helical transmembrane segment spans residues 378–398; sequence LLIVALLFILSWLPLWTLMML. Residues 399–413 lie on the Extracellular side of the membrane; it reads SDYADLSPNELQIIN. Residues 414-434 form a helical membrane-spanning segment; it reads IYIYPFAHWLAFGNSSVNPII. Topologically, residues 435 to 522 are cytoplasmic; the sequence is YGFFNENFRR…LKETTNSSEI (88 aa).

Belongs to the G-protein coupled receptor 1 family. As to expression, isoform 1 is abundant in placenta. Relatively highly expressed in thymus, testis, and small intestine. Expressed at low levels in several tissues including spleen, prostate, brain, heart, ovary, colon, kidney, lung, liver and pancreas and not expressed in skeletal muscle and leukocytes. Isoform 2 expression is highest in placenta (but at relatively low level compared to isoform 1). Very low level of expression in numerous tissues including adipose tissue and many brain regions. Isoform 3 is expressed in brain and heart and, at lower levels, in kidney, liver, lung and pancreas.

Its subcellular location is the cell membrane. Functionally, receptor for NPAF (A-18-F-amide) and NPFF (F-8-F-amide) neuropeptides, also known as morphine-modulating peptides. Can also be activated by a variety of naturally occurring or synthetic FMRF-amide like ligands. This receptor mediates its action by association with G proteins that activate a phosphatidylinositol-calcium second messenger system. The sequence is that of Neuropeptide FF receptor 2 from Homo sapiens (Human).